Reading from the N-terminus, the 83-residue chain is Small ribosomal subunit protein bS16 (83 aa).

It belongs to the bacterial ribosomal protein bS16 family.

The protein is Small ribosomal subunit protein bS16 of Stutzerimonas stutzeri (strain A1501) (Pseudomonas stutzeri).